Consider the following 594-residue polypeptide: Golgi-associated RAB2 interactor protein 4 (594 aa).

A disordered region spans residues 390–525 (AAGLPVSTRQ…SSGSSKRLGR (136 aa)). The segment covering 396-406 (STRQSKSSLSG) has biased composition (polar residues). Basic and acidic residues-rich tracts occupy residues 408 to 433 (HGRE…DKAL), 442 to 455 (TGES…DKIA), and 468 to 477 (ASRDGKKEKG). Residues 510-521 (RSSSTTSSGSSK) are compositionally biased toward low complexity.

It belongs to the GARIN family. Interacts (via N-terminus) with RAB2B (in GTP-bound form).

The protein localises to the golgi apparatus. In terms of biological role, RAB2B effector protein required for the compacted Golgi morphology, probably through interaction with small GTPase RAB2B. This chain is Golgi-associated RAB2 interactor protein 4 (GARIN4), found in Macaca fascicularis (Crab-eating macaque).